The primary structure comprises 310 residues: Probable manganese-dependent inorganic pyrophosphatase (310 aa).

Mn(2+)-binding residues include His10, Asp14, Asp16, Asp75, His97, and Asp149.

The protein belongs to the PPase class C family. The cofactor is Mn(2+).

The protein localises to the cytoplasm. The catalysed reaction is diphosphate + H2O = 2 phosphate + H(+). This chain is Probable manganese-dependent inorganic pyrophosphatase, found in Clostridium acetobutylicum (strain ATCC 824 / DSM 792 / JCM 1419 / IAM 19013 / LMG 5710 / NBRC 13948 / NRRL B-527 / VKM B-1787 / 2291 / W).